The following is a 482-amino-acid chain: Replication factor C large subunit (482 aa).

Residue 46-53 (GPPGSGKT) coordinates ATP. A disordered region spans residues 420 to 482 (EKETPKKKKK…KKQATLDSFF (63 aa)). Residues 442 to 476 (KISEPPKEPLKEVIEETVEKTDKKEKEKKDPKKQA) are compositionally biased toward basic and acidic residues.

This sequence belongs to the activator 1 small subunits family. RfcL subfamily. In terms of assembly, heteromultimer composed of small subunits (RfcS) and large subunits (RfcL).

Its function is as follows. Part of the RFC clamp loader complex which loads the PCNA sliding clamp onto DNA. This chain is Replication factor C large subunit, found in Methanococcus maripaludis (strain C7 / ATCC BAA-1331).